Consider the following 253-residue polypeptide: HTH-type transcriptional regulator YdeO (253 aa).

Residues 137-233 enclose the HTH araC/xylS-type domain; the sequence is GKVRNIVNMK…GNSPKRVSKE (97 aa). DNA-binding regions (H-T-H motif) lie at residues 154-175 and 200-223; these read KDIC…KQEQ and VNKI…RKHF.

Its function is as follows. Induces the expression of gadE and mdtEF. Could also regulate the expression of other genes involved in acid resistance. This chain is HTH-type transcriptional regulator YdeO (ydeO), found in Escherichia coli O6:H1 (strain CFT073 / ATCC 700928 / UPEC).